The primary structure comprises 335 residues: Probable deoxyhypusine synthase (335 aa).

Lysine 307 (nucleophile) is an active-site residue.

It belongs to the deoxyhypusine synthase family. NAD(+) serves as cofactor.

The catalysed reaction is [eIF5A protein]-L-lysine + spermidine = [eIF5A protein]-deoxyhypusine + propane-1,3-diamine. It participates in protein modification; eIF5A hypusination. Catalyzes the NAD-dependent oxidative cleavage of spermidine and the subsequent transfer of the butylamine moiety of spermidine to the epsilon-amino group of a specific lysine residue of the eIF-5A precursor protein to form the intermediate deoxyhypusine residue. This chain is Probable deoxyhypusine synthase (dys), found in Pyrococcus abyssi (strain GE5 / Orsay).